A 314-amino-acid chain; its full sequence is Protein phosphatase PTC7 homolog fig (314 aa).

Positions 43 to 309 constitute a PPM-type phosphatase domain; it reads PYLVTVVQGR…DDITLILSSV (267 aa). Mn(2+) contacts are provided by aspartate 87, glycine 88, and aspartate 232.

Belongs to the PP2C family. Requires Mg(2+) as cofactor. Mn(2+) serves as cofactor.

It carries out the reaction O-phospho-L-seryl-[protein] + H2O = L-seryl-[protein] + phosphate. The catalysed reaction is O-phospho-L-threonyl-[protein] + H2O = L-threonyl-[protein] + phosphate. This chain is Protein phosphatase PTC7 homolog fig, found in Drosophila simulans (Fruit fly).